Reading from the N-terminus, the 265-residue chain is 2-C-methyl-D-erythritol 4-phosphate cytidylyltransferase (265 aa).

The segment covering 231 to 241 has biased composition (basic and acidic residues); the sequence is DRGGASREAER. Residues 231–265 are disordered; that stretch reads DRGGASREAERSAMPSAATSVFSGARSAASGSEEV. Over residues 253-265 the composition is skewed to low complexity; the sequence is SGARSAASGSEEV.

It belongs to the IspD/TarI cytidylyltransferase family. IspD subfamily.

It carries out the reaction 2-C-methyl-D-erythritol 4-phosphate + CTP + H(+) = 4-CDP-2-C-methyl-D-erythritol + diphosphate. It functions in the pathway isoprenoid biosynthesis; isopentenyl diphosphate biosynthesis via DXP pathway; isopentenyl diphosphate from 1-deoxy-D-xylulose 5-phosphate: step 2/6. Functionally, catalyzes the formation of 4-diphosphocytidyl-2-C-methyl-D-erythritol from CTP and 2-C-methyl-D-erythritol 4-phosphate (MEP). This is 2-C-methyl-D-erythritol 4-phosphate cytidylyltransferase from Xanthomonas campestris pv. campestris (strain 8004).